The chain runs to 572 residues: Urease subunit alpha (572 aa).

In terms of domain architecture, Urease spans 134–572 (AGIDTHIHLI…AAMNQLYFFG (439 aa)). H139, H141, and K222 together coordinate Ni(2+). At K222 the chain carries N6-carboxylysine. Substrate is bound at residue H224. 2 residues coordinate Ni(2+): H251 and H277. Residue H325 is the Proton donor of the active site. D365 is a Ni(2+) binding site.

The protein belongs to the metallo-dependent hydrolases superfamily. Urease alpha subunit family. Heterotrimer of UreA (gamma), UreB (beta) and UreC (alpha) subunits. Three heterotrimers associate to form the active enzyme. It depends on Ni cation as a cofactor. Post-translationally, carboxylation allows a single lysine to coordinate two nickel ions.

Its subcellular location is the cytoplasm. The enzyme catalyses urea + 2 H2O + H(+) = hydrogencarbonate + 2 NH4(+). Its pathway is nitrogen metabolism; urea degradation; CO(2) and NH(3) from urea (urease route): step 1/1. The polypeptide is Urease subunit alpha (Edwardsiella ictaluri (strain 93-146)).